The following is a 142-amino-acid chain: RNA polymerase-binding transcription factor DksA (142 aa).

Disordered regions lie at residues 1–20, 51–70, and 119–142; these read MQTA…EDEP, HLQK…SSET, and RPTA…HRDD. The dksA C4-type zinc-finger motif lies at 104–128; sequence CEETGEPIGLARLEARPTATMSVEA. Residues 128-142 are compositionally biased toward basic and acidic residues; it reads AQERHERRERVHRDD.

The protein belongs to the DksA family. As to quaternary structure, interacts directly with the RNA polymerase.

It localises to the cytoplasm. In terms of biological role, transcription factor that acts by binding directly to the RNA polymerase (RNAP). Required for negative regulation of rRNA expression and positive regulation of several amino acid biosynthesis promoters. The chain is RNA polymerase-binding transcription factor DksA from Caulobacter vibrioides (strain ATCC 19089 / CIP 103742 / CB 15) (Caulobacter crescentus).